A 217-amino-acid polypeptide reads, in one-letter code: Oxygen regulatory protein NreC (217 aa).

In terms of domain architecture, Response regulatory spans 2–119 (KIVIADDHAV…QLLLAIRTVY (118 aa)). D53 carries the 4-aspartylphosphate modification. Positions 148 to 213 (TTDPFKILSK…ELVEYALKKK (66 aa)) constitute an HTH luxR-type domain. The H-T-H motif DNA-binding region spans 172 to 191 (NKEIAEKLFVSVKTVEAHKT).

Phosphorylated by NreB.

It localises to the cytoplasm. Functionally, member of the two-component regulatory system NreB/NreC involved in the control of dissimilatory nitrate/nitrite reduction in response to oxygen. Phosphorylated NreC binds to a GC-rich palindromic sequence at the promoters of the nitrate (narGHJI) and nitrite (nir) reductase operons, as well as the putative nitrate transporter gene narT, and activates their expression. This chain is Oxygen regulatory protein NreC (nreC), found in Staphylococcus aureus (strain USA300 / TCH1516).